The chain runs to 290 residues: ATP synthase gamma chain (290 aa).

It belongs to the ATPase gamma chain family. As to quaternary structure, F-type ATPases have 2 components, CF(1) - the catalytic core - and CF(0) - the membrane proton channel. CF(1) has five subunits: alpha(3), beta(3), gamma(1), delta(1), epsilon(1). CF(0) has three main subunits: a, b and c.

Its subcellular location is the cell inner membrane. Functionally, produces ATP from ADP in the presence of a proton gradient across the membrane. The gamma chain is believed to be important in regulating ATPase activity and the flow of protons through the CF(0) complex. The chain is ATP synthase gamma chain from Chelativorans sp. (strain BNC1).